A 279-amino-acid polypeptide reads, in one-letter code: Vomeronasal type-1 receptor A8 (279 aa).

The Extracellular portion of the chain corresponds to 1-19 (MNKDHTLYCSVYIRNAFFS). The chain crosses the membrane as a helical span at residues 20–40 (EIGIGISANSCLLLFHTFMFI). At 41-49 (RGHRPRLTD) the chain is on the cytoplasmic side. The helical transmembrane segment at 50–70 (LPIGFVALIHLVMLLLAAYIT) threads the bilayer. At 71–93 (EDFFMSSGGWDDITCKLVIFLHR) the chain is on the extracellular side. C85 and C172 are joined by a disulfide. Residues 94-114 (FFRSLSVCATCLLSVFQAIIL) traverse the membrane as a helical segment. Topologically, residues 115–134 (CPQSSHLAKLKQNSPHQLSY) are cytoplasmic. Residues 135 to 155 (FFIFLSIFYTSISSQILIAAI) traverse the membrane as a helical segment. The Extracellular segment spans residues 156-159 (PTQN). N159 is a glycosylation site (N-linked (GlcNAc...) asparagine). The helical transmembrane segment at 160–180 (ITFVNLIYITNSCSFLPLSSS) threads the bilayer. Residues 181-187 (MQHTFST) are Cytoplasmic-facing. The chain crosses the membrane as a helical span at residues 188-208 (LLTFRNVFVIGLMGLSTCYMA). Topologically, residues 209 to 238 (TLLCRHKTRSQRLQNSKLSPKATPEQRALR) are extracellular. A helical membrane pass occupies residues 239 to 259 (TILMLMSFFLLMSTFDSIISY). The Cytoplasmic portion of the chain corresponds to 260–279 (SRTIITGKSTALLCPDSCRS).

Belongs to the G-protein coupled receptor 1 family. Expressed in a subset of sensory neurons located in the apical layer of the vomeronasal organ.

It is found in the cell membrane. Functionally, putative pheromone receptor implicated in the regulation of social and reproductive behavior. In Mus musculus (Mouse), this protein is Vomeronasal type-1 receptor A8.